A 72-amino-acid polypeptide reads, in one-letter code: Translation initiation factor IF-1 (72 aa).

Residues 1–72 (MSKEDAIEVM…TRGRIVYRYK (72 aa)) form the S1-like domain.

Belongs to the IF-1 family. As to quaternary structure, component of the 30S ribosomal translation pre-initiation complex which assembles on the 30S ribosome in the order IF-2 and IF-3, IF-1 and N-formylmethionyl-tRNA(fMet); mRNA recruitment can occur at any time during PIC assembly.

It is found in the cytoplasm. Functionally, one of the essential components for the initiation of protein synthesis. Stabilizes the binding of IF-2 and IF-3 on the 30S subunit to which N-formylmethionyl-tRNA(fMet) subsequently binds. Helps modulate mRNA selection, yielding the 30S pre-initiation complex (PIC). Upon addition of the 50S ribosomal subunit IF-1, IF-2 and IF-3 are released leaving the mature 70S translation initiation complex. This chain is Translation initiation factor IF-1, found in Koribacter versatilis (strain Ellin345).